The following is a 576-amino-acid chain: Putative export ATP-binding/permease protein RP696 (576 aa).

An ABC transmembrane type-1 domain is found at 20 to 303; sequence LIIVMISLLS…IFELLSEMHL (284 aa). Transmembrane regions (helical) follow at residues 21-41, 61-81, 135-155, 158-178, 242-262, and 277-297; these read IIVM…GSIF, ILYI…RSYF, FLSF…LMFF, FKLA…LIKF, ALFF…IVWI, and IISF…IFEL. Residues 336–572 form the ABC transporter domain; sequence IEFKNVDFTY…SEIYRNICRE (237 aa). 371 to 378 lines the ATP pocket; the sequence is GRSGAGKS.

The protein belongs to the ABC transporter superfamily. As to quaternary structure, homodimer.

The protein localises to the cell inner membrane. Functionally, part of an ABC transporter complex. Transmembrane domains (TMD) form a pore in the inner membrane and the ATP-binding domain (NBD) is responsible for energy generation. The chain is Putative export ATP-binding/permease protein RP696 from Rickettsia prowazekii (strain Madrid E).